We begin with the raw amino-acid sequence, 430 residues long: tRNA-2-methylthio-N(6)-dimethylallyladenosine synthase (430 aa).

Positions 1 to 110 constitute an MTTase N-terminal domain; the sequence is MKVHIFTYGC…VPDAVLNAKN (110 aa). [4Fe-4S] cluster is bound by residues cysteine 10, cysteine 46, cysteine 75, cysteine 146, cysteine 150, and cysteine 153. The region spanning 132 to 363 is the Radical SAM core domain; sequence RSSNHHAWVT…LNLQKTINKE (232 aa). The TRAM domain occupies 366 to 427; the sequence is KSYLGKEVEV…AGPLYGEIKK (62 aa).

It belongs to the methylthiotransferase family. MiaB subfamily. In terms of assembly, monomer. The cofactor is [4Fe-4S] cluster.

The protein resides in the cytoplasm. The enzyme catalyses N(6)-dimethylallyladenosine(37) in tRNA + (sulfur carrier)-SH + AH2 + 2 S-adenosyl-L-methionine = 2-methylsulfanyl-N(6)-dimethylallyladenosine(37) in tRNA + (sulfur carrier)-H + 5'-deoxyadenosine + L-methionine + A + S-adenosyl-L-homocysteine + 2 H(+). In terms of biological role, catalyzes the methylthiolation of N6-(dimethylallyl)adenosine (i(6)A), leading to the formation of 2-methylthio-N6-(dimethylallyl)adenosine (ms(2)i(6)A) at position 37 in tRNAs that read codons beginning with uridine. This is tRNA-2-methylthio-N(6)-dimethylallyladenosine synthase from Fervidobacterium nodosum (strain ATCC 35602 / DSM 5306 / Rt17-B1).